Here is a 158-residue protein sequence, read N- to C-terminus: Cyclic pyranopterin monophosphate synthase (158 aa).

Substrate-binding positions include 73 to 75 (LCH) and 110 to 111 (ME). D125 is an active-site residue.

It belongs to the MoaC family. As to quaternary structure, homohexamer; trimer of dimers.

It catalyses the reaction (8S)-3',8-cyclo-7,8-dihydroguanosine 5'-triphosphate = cyclic pyranopterin phosphate + diphosphate. Its pathway is cofactor biosynthesis; molybdopterin biosynthesis. Its function is as follows. Catalyzes the conversion of (8S)-3',8-cyclo-7,8-dihydroguanosine 5'-triphosphate to cyclic pyranopterin monophosphate (cPMP). This is Cyclic pyranopterin monophosphate synthase from Ectopseudomonas mendocina (strain ymp) (Pseudomonas mendocina).